Here is a 1495-residue protein sequence, read N- to C-terminus: Ras GTPase-activating-like protein IQG1 (1495 aa).

The region spanning 108 to 221 (LCRVSEVKIW…ILISMINKKW (114 aa)) is the Calponin-homology (CH) domain. Thr264 carries the post-translational modification Phosphothreonine. At Ser268 the chain carries Phosphoserine. Thr299 is modified (phosphothreonine). IQ domains lie at 447–467 (EQDILRFQACLRGNKFRVLSS), 538–567 (SHYPLTKLQSYMRASYVRKKVMSLNTKLND), 568–597 (ERESIMKFSAIIRGNVVRCSEDAILSAVHD), 599–628 (HKENISKLQSLIRGIFTRSCLASIIYSLGK), 629–658 (ENCNIIQLSACIRGNAVRHKVQSLFAPENN), 687–716 (EYNNLALFQAFSRGALVRESLDQKSSFYKR), and 717–746 (NVRSVIMIQSWIRKSLQRSAYLELLDCPNP). Residues 759–798 (NGTATIEEVQNQLESCQASLDSENMKKERLLKSIRQQLNI) are a coiled coil. The region spanning 876 to 1100 (SYFTRFVCEM…PHIKDVLYNV (225 aa)) is the Ras-GAP domain.

In terms of assembly, interacts with AFR1. Interacts with AKR1. Interacts with activated CDC42. Interacts with calmodulin CMD1. Interacts with myosin MYO1 and its light chain MLC1. Interacts with BUD4. Interacts with INN1. Interacts with SEC3. Interacts with TEM1.

It localises to the bud neck. Required for the assembly and the contraction of the actomyosin ring at the bud neck during cytokinesis. Seems to be involved in additional tasks during cell division like axial bud-site selection and targeted secretion by recruiting the spatial landmark BUD4, the septin CDC12 and the secretion landmark SEC3 to the bud neck. May be regulated by calcium ions. This Saccharomyces cerevisiae (strain ATCC 204508 / S288c) (Baker's yeast) protein is Ras GTPase-activating-like protein IQG1 (IQG1).